A 331-amino-acid chain; its full sequence is Glycerophosphodiester phosphodiesterase 1 (331 aa).

The Cytoplasmic segment spans residues 1 to 2; it reads MW. Residues 3 to 23 traverse the membrane as a helical segment; sequence LWEEQGGLMGPFSFLLLVLLL. Topologically, residues 24-254 are lumenal; that stretch reads LTRSPFNACL…WKQSMFVALD (231 aa). Positions 65–331 constitute a GP-PDE domain; it reads VSAIAHRGGS…SMLEDCTPEF (267 aa). Mg(2+) is bound by residues Glu97 and Asp99. N-linked (GlcNAc...) asparagine glycosylation occurs at Asn168. Asp174 contacts Mg(2+). Asn198 carries an N-linked (GlcNAc...) asparagine glycan. The chain crosses the membrane as a helical span at residues 255–275; that stretch reads ILLDWSMHNILWYLCGVSAFL. The Cytoplasmic portion of the chain corresponds to 276 to 331; the sequence is AQKDFISPDYVKKWSAKGIQVVAWTVNTFDEKSYYESHLGSSYITDSMLEDCTPEF.

Belongs to the glycerophosphoryl diester phosphodiesterase family. Interacts with PRAF2. Interacts with RGS16. Requires Mg(2+) as cofactor. In terms of processing, N-glycosylated.

It is found in the cell membrane. Its subcellular location is the cytoplasmic vesicle membrane. The catalysed reaction is sn-glycero-3-phospho-1D-myo-inositol + H2O = myo-inositol + sn-glycerol 3-phosphate + H(+). It catalyses the reaction 1-O-(1Z-octadecenyl)-sn-glycero-3-phospho-(N-5Z,8Z,11Z,14Z-eicosatetraenoyl)-ethanolamine + H2O = 1-O-(1Z-octadecenyl)-sn-glycero-3-phosphate + N-(5Z,8Z,11Z,14Z-eicosatetraenoyl)-ethanolamine + H(+). It carries out the reaction 1-O-(1Z-octadecenyl)-sn-glycero-3-phospho-(N-9Z-octadecenoyl)-ethanolamine + H2O = 1-O-(1Z-octadecenyl)-sn-glycero-3-phosphate + N-(9Z-octadecenoyl) ethanolamine + H(+). The enzyme catalyses 1-O-(1Z-octadecenyl)-sn-glycero-3-phospho-N-hexadecanoyl-ethanolamine + H2O = 1-O-(1Z-octadecenyl)-sn-glycero-3-phosphate + N-hexadecanoylethanolamine + H(+). The catalysed reaction is N-(4Z,7Z,10Z,13Z,16Z,19Z)-docosahexaenoyl-sn-glycero-3-phosphoethanolamine + H2O = N-(4Z,7Z,10Z,13Z,16Z,19Z)-docosahexaenoyl ethanolamine + sn-glycerol 3-phosphate + H(+). It catalyses the reaction N-eicosanoyl-sn-glycero-3-phosphoethanolamine + H2O = N-eicosanoyl ethanolamine + sn-glycerol 3-phosphate + H(+). It carries out the reaction N-hexadecanoyl-sn-glycero-3-phosphoethanolamine + H2O = N-hexadecanoylethanolamine + sn-glycerol 3-phosphate + H(+). The enzyme catalyses N-(9Z-octadecenoyl)-sn-glycero-3-phosphoethanolamine + H2O = N-(9Z-octadecenoyl) ethanolamine + sn-glycerol 3-phosphate + H(+). The catalysed reaction is N-(5Z,8Z,11Z,14Z-eicosatetraenoyl)-sn-glycero-3-phosphoethanolamine + H2O = N-(5Z,8Z,11Z,14Z-eicosatetraenoyl)-ethanolamine + sn-glycerol 3-phosphate + H(+). Inhibited by EDTA, calcium chloride, and zinc chloride. Enhanced by magnesium chloride. Glycerophosphodiester phosphodiesterase activity can be modulated by G-protein signaling pathways. In terms of biological role, hydrolyzes the phosphodiester bond of glycerophosphodiesters such as glycerophosphoinositol (GroPIns) and glycerophosphoethanolamine (GroPEth), to yield a glycerol phosphate and an alcohol. Hydrolyzes glycerophospho-N-acylethanolamines to N-acylethanolamines in the brain and participates in bioactive N-acylethanolamine biosynthesis such as anandamide (an endocannabinoid), N-palmitoylethanolamine (an anti-inflammatory), and N-oleoylethanolamine (an anorexic). In addition, has a lysophospholipase D activity by hydrolyzing N-acyl-lysoplasmenylethanolamine (N-acyl-lysoPlsEt) to N-acylethanolamine. However lysophospholipase D activity is lower than glycerophosphodiester phosphodiesterase activity. Has little or no activity towards glycerophosphocholine. This Bos taurus (Bovine) protein is Glycerophosphodiester phosphodiesterase 1.